The chain runs to 89 residues: Large ribosomal subunit protein bL27 (89 aa).

It belongs to the bacterial ribosomal protein bL27 family.

This Synechococcus sp. (strain JA-3-3Ab) (Cyanobacteria bacterium Yellowstone A-Prime) protein is Large ribosomal subunit protein bL27.